Here is a 545-residue protein sequence, read N- to C-terminus: Membrane protein insertase YidC (545 aa).

Residues 6 to 26 (LILFSALVLVLFLMWDAWQTD) traverse the membrane as a helical segment. Residues 34 to 59 (PPPPQPTASSGESSPVLPEAVPDAPP) form a disordered region. 3 helical membrane passes run 357–377 (LVGN…LVFF), 428–448 (GGCL…WMLL), and 505–525 (PVMF…YWVV).

The protein belongs to the OXA1/ALB3/YidC family. Type 1 subfamily. Interacts with the Sec translocase complex via SecD. Specifically interacts with transmembrane segments of nascent integral membrane proteins during membrane integration.

The protein resides in the cell inner membrane. Functionally, required for the insertion and/or proper folding and/or complex formation of integral membrane proteins into the membrane. Involved in integration of membrane proteins that insert both dependently and independently of the Sec translocase complex, as well as at least some lipoproteins. Aids folding of multispanning membrane proteins. The protein is Membrane protein insertase YidC of Nitrosococcus oceani (strain ATCC 19707 / BCRC 17464 / JCM 30415 / NCIMB 11848 / C-107).